The following is a 142-amino-acid chain: Ninjurin-2 (142 aa).

The segment at 1 to 21 is disordered; sequence MESARENIDLQPGSSDPRSQP. The Extracellular segment spans residues 1–60; sequence MESARENIDLQPGSSDPRSQPINLNHYATKKSVAESMLDVALFMSNAMRLKAVLEQGPSS. Residues 12 to 21 are compositionally biased toward polar residues; it reads PGSSDPRSQP. The tract at residues 25–37 is helix alpha1; that stretch reads NHYATKKSVAESM. A helix alpha2 region spans residues 38 to 57; it reads LDVALFMSNAMRLKAVLEQG. The helical transmembrane segment at 61–92 threads the bilayer; it reads HYYTTLVTLISLSLLLQVVIGVLLVVIARLNL. The Cytoplasmic segment spans residues 93 to 96; the sequence is NEVE. Residues 97-126 traverse the membrane as a helical segment; sequence KQWRLNQLNNAATILVFFTVVINVFITAFG. Gln-103 lines the cholesterol pocket. Residues 127–142 are Extracellular-facing; sequence AHKTGFLAARASRNPL.

The protein belongs to the ninjurin family. Homooligomer; in response to stimuli, homooligomerizes into filaments. In contrast to NINJ1, the filament is curved toward the intracellular space, preventing its circularization on a relatively flat membrane to mediate plasma membrane rupture: curvature is caused by cholesterol-binding at the cytoplasmic leaflet. Widely expressed. In adult, higher expression in the bone marrow and peripheral blood lymphocytes, medium in the lung, lymph node, thyroid, uterus, thymus, spleen, prostate and skeletal muscle, lower in the liver, placenta, brain, heart and kidney. In embryo, higher expression in the thymus, heart and liver, lower in the spleen, lung, brain and kidney.

Its subcellular location is the cell membrane. Its function is as follows. Its role in unclear. In contrast to NINJ1 paralog, does not mediate plasma membrane rupture (cytolysis) downstream of necroptotic and pyroptotic programmed cell death. While it is able to oligomerize and form filaments, filaments are curved toward the intracellular space, preventing circularization to mediate plasma membrane rupture. May act as a homophilic transmembrane adhesion molecule involved in nerve regeneration. Promotes axonal growth. The protein is Ninjurin-2 of Homo sapiens (Human).